A 480-amino-acid polypeptide reads, in one-letter code: Probable serine/threonine-protein phosphatase 2A regulatory subunit B'' subunit TON2 (480 aa).

3 consecutive EF-hand domains span residues 186–221, 294–329, and 369–404; these read VSLT…LIPN, TSAQ…TLTE, and DTPE…VHQK. Residues Asp-307, Asp-309, Ser-311, Ser-313, and Glu-318 each contribute to the Ca(2+) site.

Interacts with PP2AA1. Widely expressed.

Its subcellular location is the cytoplasm. The protein localises to the cytoskeleton. Functionally, probable regulatory subunit of type 2A protein phosphatase involved in the control of the dynamic organization of the cortical cytoskeleton. Plays an important role in the organization of interphase microtubule arrays in part through the regulation of nucleation geometry. Required for the reorganization of cortical arrays in response to light. This is Probable serine/threonine-protein phosphatase 2A regulatory subunit B'' subunit TON2 (TON2) from Arabidopsis thaliana (Mouse-ear cress).